The sequence spans 274 residues: Deoxyribonuclease TATDN3 (274 aa).

Zn(2+) contacts are provided by histidine 12, histidine 14, glutamate 107, histidine 147, histidine 170, and aspartate 218.

It belongs to the metallo-dependent hydrolases superfamily. TatD-type hydrolase family. It depends on Mn(2+) as a cofactor. Ca(2+) serves as cofactor. Requires Mg(2+) as cofactor. Zn(2+) is required as a cofactor.

It is found in the nucleus. With respect to regulation, the 3'-exonuclease activity is sensitive to the metal ion present in the active site, whereas the AP endodeoxyribonuclease activity is observed in a variety of divalent metal cofactors. 3'-exoxonuclease activity is suppressed in the presence of Ca(2+), Zn(2+) and Ni(2+). Functionally, exhibits 3'-exonuclease activities and apurinic/apyrimidinic (AP) endonuclease (in vitro). Show preferential AP endonuclease activity on double-stranded DNA substrates and 3'- exonuclease activity on single-stranded DNA. This is Deoxyribonuclease TATDN3 (TATDN3) from Homo sapiens (Human).